The sequence spans 61 residues: Temporin-SN4 (61 aa).

The signal sequence occupies residues 1–22; the sequence is MFTLKKTLLLLFFLGTINLSLC. The propeptide at 23–44 is removed in mature form; sequence EEERNAEEERRDGDDEMDVEVK. Lys-61 bears the Lysine amide mark.

The protein belongs to the frog skin active peptide (FSAP) family. Temporin subfamily. Expressed by the skin glands.

It localises to the secreted. In terms of biological role, antimicrobial peptide. Active against some Gram-positive and Gram-negative bacterial strains. Active against fungus C.glabrata 090902 but not against C.albicans ATCC 12231. Shows weak hemolytic activity against human erythrocytes. In Sylvirana spinulosa (Fine-spined frog), this protein is Temporin-SN4.